The sequence spans 420 residues: Dynein axonemal assembly factor 4 (420 aa).

Residues 3–87 enclose the CS domain; it reads VRVSEFSWQQ…KEPVLWESLS (85 aa). The interval 7 to 103 is mediates interaction with ESR1 and STUB1; sequence EFSWQQTPAA…EMMQRIREKS (97 aa). The span at 165-192 shows a compositional bias: basic and acidic residues; that stretch reads CQKKADGQKRVQRKEKPLQGKQAEERGA. Residues 165 to 212 are disordered; it reads CQKKADGQKRVQRKEKPLQGKQAEERGALKPQSLPRKAPPTRLPTRGR. TPR repeat units follow at residues 288-321, 323-355, and 364-397; these read PDWL…NRKI, VLYL…LTPP, and MKAH…DPAN.

In terms of assembly, interacts with ZMYND10. Interacts with STUB1. Interacts with ESR1 and ESR2. Interacts with DNAAF2. Interacts with CCT3, CCT4, CCT5 and CCT8. Interacts with DNAAF6/PIH1D3.

It localises to the nucleus. The protein localises to the cytoplasm. It is found in the cell projection. The protein resides in the neuron projection. Its subcellular location is the dynein axonemal particle. Functionally, involved in neuronal migration during development of the cerebral neocortex. May regulate the stability and proteasomal degradation of the estrogen receptors that play an important role in neuronal differentiation, survival and plasticity. Axonemal dynein assembly factor required for ciliary motility. The protein is Dynein axonemal assembly factor 4 of Rattus norvegicus (Rat).